The following is a 183-amino-acid chain: Non-classical export protein 2 homolog (183 aa).

Over 1–8 (MVGIRQYG) the chain is Cytoplasmic. The chain crosses the membrane as a helical span at residues 9–29 (VFTWVFRTFQLAIDTIVLALA). The Extracellular segment spans residues 30 to 44 (SALVNQQTSGGSPGK). A helical membrane pass occupies residues 45 to 65 (INFSVAVGSFAILTFFLTAVG). Topologically, residues 66 to 75 (RFLPTILGNP) are cytoplasmic. A helical transmembrane segment spans residues 76 to 96 (WLIAFYDFVNWVFALTGGCCI). Topologically, residues 97 to 131 (AVAIRVHACDNQKYLDRNHYTQGSMRRCQELKALC) are extracellular. The helical transmembrane segment at 132 to 152 (FFLWFMFGLYVASFIVQIFIA) threads the bilayer. Residues 153–183 (KNDTPNYTFRGRGRGKGSGPAVAPRPVMSAV) are Cytoplasmic-facing. The interval 163 to 183 (GRGRGKGSGPAVAPRPVMSAV) is disordered.

It belongs to the NCE102 family.

The protein resides in the cytoplasm. The protein localises to the golgi apparatus membrane. It localises to the cell membrane. Functionally, involved in membrane organization and might act as a sensor of sphingolipids that regulates plasma membrane function. Involved in a novel pathway of export of proteins that lack a cleavable signal sequence. The protein is Non-classical export protein 2 homolog (fhn1) of Schizosaccharomyces pombe (strain 972 / ATCC 24843) (Fission yeast).